Here is a 376-residue protein sequence, read N- to C-terminus: Queuine tRNA-ribosyltransferase (376 aa).

Asp89 acts as the Proton acceptor in catalysis. Residues 89–93 (DSGGF), Asp143, Gln194, and Gly221 contribute to the substrate site. Residues 252–258 (GVGTPAN) are RNA binding. Catalysis depends on Asp271, which acts as the Nucleophile. 4 residues coordinate Zn(2+): Cys309, Cys311, Cys314, and His340.

This sequence belongs to the queuine tRNA-ribosyltransferase family. As to quaternary structure, homodimer. Within each dimer, one monomer is responsible for RNA recognition and catalysis, while the other monomer binds to the replacement base PreQ1. Requires Zn(2+) as cofactor.

It carries out the reaction 7-aminomethyl-7-carbaguanine + guanosine(34) in tRNA = 7-aminomethyl-7-carbaguanosine(34) in tRNA + guanine. It participates in tRNA modification; tRNA-queuosine biosynthesis. Its function is as follows. Catalyzes the base-exchange of a guanine (G) residue with the queuine precursor 7-aminomethyl-7-deazaguanine (PreQ1) at position 34 (anticodon wobble position) in tRNAs with GU(N) anticodons (tRNA-Asp, -Asn, -His and -Tyr). Catalysis occurs through a double-displacement mechanism. The nucleophile active site attacks the C1' of nucleotide 34 to detach the guanine base from the RNA, forming a covalent enzyme-RNA intermediate. The proton acceptor active site deprotonates the incoming PreQ1, allowing a nucleophilic attack on the C1' of the ribose to form the product. After dissociation, two additional enzymatic reactions on the tRNA convert PreQ1 to queuine (Q), resulting in the hypermodified nucleoside queuosine (7-(((4,5-cis-dihydroxy-2-cyclopenten-1-yl)amino)methyl)-7-deazaguanosine). This chain is Queuine tRNA-ribosyltransferase, found in Clostridium kluyveri (strain NBRC 12016).